We begin with the raw amino-acid sequence, 366 residues long: tRNA/tmRNA (uracil-C(5))-methyltransferase (366 aa).

S-adenosyl-L-methionine is bound by residues Gln190, Tyr218, Asn223, Glu239, and Asp299. Catalysis depends on Cys324, which acts as the Nucleophile. Glu358 (proton acceptor) is an active-site residue.

This sequence belongs to the class I-like SAM-binding methyltransferase superfamily. RNA M5U methyltransferase family. TrmA subfamily.

The catalysed reaction is uridine(54) in tRNA + S-adenosyl-L-methionine = 5-methyluridine(54) in tRNA + S-adenosyl-L-homocysteine + H(+). The enzyme catalyses uridine(341) in tmRNA + S-adenosyl-L-methionine = 5-methyluridine(341) in tmRNA + S-adenosyl-L-homocysteine + H(+). Dual-specificity methyltransferase that catalyzes the formation of 5-methyluridine at position 54 (m5U54) in all tRNAs, and that of position 341 (m5U341) in tmRNA (transfer-mRNA). This chain is tRNA/tmRNA (uracil-C(5))-methyltransferase, found in Escherichia coli O157:H7 (strain EC4115 / EHEC).